The chain runs to 139 residues: Trafficking protein particle complex subunit 2-like protein (139 aa).

Belongs to the TRAPP small subunits family. Sedlin subfamily. As to quaternary structure, component of the multisubunit TRAPP (transport protein particle) complex, which includes at least TRAPPC2, TRAPPC2L, TRAPPC3, TRAPPC3L, TRAPPC4, TRAPPC5, TRAPPC8, TRAPPC9, TRAPPC10, TRAPPC11 and TRAPPC12. Interacts with the heterodimer TRAPPC3-TRAPPC6A.

The protein resides in the cytoplasm. It is found in the perinuclear region. Its subcellular location is the endoplasmic reticulum. It localises to the golgi apparatus. May play a role in vesicular transport from endoplasmic reticulum to Golgi. This Bos taurus (Bovine) protein is Trafficking protein particle complex subunit 2-like protein (TRAPPC2L).